We begin with the raw amino-acid sequence, 315 residues long: MQPESGANGTVIAEFILLGLLEAPGLQPVVFVLFLFAYLVTVGGNLSILAAVLVEPELHTPMYFFLGNLSVLDVGCISVTVPSMLSRLLSRKRAVPCGACLTQLFFFHLFVGVDCFLLIAMAYDRFLAICRPLTYSTRMSQTVQRMLVAASWACAFTNALTHTVAMSTLNFCGPNVINHFYCDLPQLCQLSCSSTQLSELLLFAVGFIMAGTSMALIVISYIHVAAAVLRIRSVEGRKKAFSTCGSHLTVVAIFYGSGIFNYMRLGSTKLSDKDKAVGIFNTVINPMLNPIIYSFRNPDVQSAIWRMLTGRRSLA.

Over 1–28 (MQPESGANGTVIAEFILLGLLEAPGLQP) the chain is Extracellular. N-linked (GlcNAc...) asparagine glycosylation is present at asparagine 8. A helical transmembrane segment spans residues 29–52 (VVFVLFLFAYLVTVGGNLSILAAV). At 53–60 (LVEPELHT) the chain is on the cytoplasmic side. The helical transmembrane segment at 61-82 (PMYFFLGNLSVLDVGCISVTVP) threads the bilayer. Topologically, residues 83–103 (SMLSRLLSRKRAVPCGACLTQ) are extracellular. An intrachain disulfide couples cysteine 100 to cysteine 192. Residues 104–123 (LFFFHLFVGVDCFLLIAMAY) traverse the membrane as a helical segment. Topologically, residues 124–143 (DRFLAICRPLTYSTRMSQTV) are cytoplasmic. The helical transmembrane segment at 144–161 (QRMLVAASWACAFTNALT) threads the bilayer. Residues 162–199 (HTVAMSTLNFCGPNVINHFYCDLPQLCQLSCSSTQLSE) lie on the Extracellular side of the membrane. The helical transmembrane segment at 200 to 223 (LLLFAVGFIMAGTSMALIVISYIH) threads the bilayer. At 224 to 240 (VAAAVLRIRSVEGRKKA) the chain is on the cytoplasmic side. The helical transmembrane segment at 241–264 (FSTCGSHLTVVAIFYGSGIFNYMR) threads the bilayer. Residues 265–275 (LGSTKLSDKDK) are Extracellular-facing. The helical transmembrane segment at 276–295 (AVGIFNTVINPMLNPIIYSF) threads the bilayer. The Cytoplasmic portion of the chain corresponds to 296–315 (RNPDVQSAIWRMLTGRRSLA).

It belongs to the G-protein coupled receptor 1 family.

It is found in the cell membrane. Functionally, odorant receptor. The chain is Olfactory receptor 3A1 (OR3A1) from Gorilla gorilla gorilla (Western lowland gorilla).